The sequence spans 362 residues: Biotin synthase (362 aa).

The Radical SAM core domain maps to 70–305 (CCGNVVDLCS…QQIIRYAGGR (236 aa)). 3 residues coordinate [4Fe-4S] cluster: Cys88, Cys92, and Cys95. Cys133, Cys170, Cys230, and Arg300 together coordinate [2Fe-2S] cluster.

This sequence belongs to the radical SAM superfamily. Biotin synthase family. As to quaternary structure, homodimer. It depends on [4Fe-4S] cluster as a cofactor. [2Fe-2S] cluster is required as a cofactor.

The catalysed reaction is (4R,5S)-dethiobiotin + (sulfur carrier)-SH + 2 reduced [2Fe-2S]-[ferredoxin] + 2 S-adenosyl-L-methionine = (sulfur carrier)-H + biotin + 2 5'-deoxyadenosine + 2 L-methionine + 2 oxidized [2Fe-2S]-[ferredoxin]. Its pathway is cofactor biosynthesis; biotin biosynthesis; biotin from 7,8-diaminononanoate: step 2/2. Functionally, catalyzes the conversion of dethiobiotin (DTB) to biotin by the insertion of a sulfur atom into dethiobiotin via a radical-based mechanism. In Synechocystis sp. (strain ATCC 27184 / PCC 6803 / Kazusa), this protein is Biotin synthase.